A 419-amino-acid chain; its full sequence is MAGSGCAWGAEPPRFLEAFGRLWQVQSRLGSGSSASVYRVRCCGTPGSPPGALKQFLPPGTTGAAASAAEYGFRKERAALEQLQGHRNIVTLYGVFTIHFSPNVPSRCLLLELLDVSVSELLLYSSHQGCSMWMIQHCARDVLEALAFLHHEGYVHADLKPRNILWSAENECFKLIDFGLSFKEGNQDVKYIQTDGYRAPEAELQNCLAQAGLQSDTECTSAVDLWSLGIILLEMFSGMKLKHTVRSQEWKANSSAIIDHIFASKAVVNAAIPAYHLRDLIKSMLHDDPGRRIPAEMALCSPFFSIPFAPHIEDLVMLPTPVLRLLNVLDDDYLENEDEYEDVVEDVKEECQKYGPVVSLLVPKENPGRGQVFVEYANAGDSKAAQKLLTGRMFDGKFVVATFYPLSAYKRGYLYQTLL.

A Protein kinase domain is found at 23–303; the sequence is WQVQSRLGSG…PAEMALCSPF (281 aa). ATP contacts are provided by residues 29–37 and Lys-54; that span reads LGSGSSASV. The active-site Proton acceptor is Asp-158. Residues 323-405 enclose the RRM domain; that stretch reads LRLLNVLDDD…GKFVVATFYP (83 aa).

It belongs to the protein kinase superfamily. Ser/Thr protein kinase family. In terms of assembly, interacts with PAM and CDKN1B/p27Kip1. Interacts with stathmin.

The protein resides in the nucleus. The enzyme catalyses L-seryl-[protein] + ATP = O-phospho-L-seryl-[protein] + ADP + H(+). It carries out the reaction L-threonyl-[protein] + ATP = O-phospho-L-threonyl-[protein] + ADP + H(+). Functionally, upon serum stimulation, phosphorylates CDKN1B/p27Kip1, thus controlling CDKN1B subcellular location and cell cycle progression in G1 phase. May be involved in trafficking and/or processing of RNA. This Mus musculus (Mouse) protein is Serine/threonine-protein kinase Kist (Uhmk1).